Here is a 334-residue protein sequence, read N- to C-terminus: Cathepsin L2 (334 aa).

An N-terminal signal peptide occupies residues 1–17 (MNLSLVLAAFCLGIASA). Residues 18-113 (VPKFDQNLDT…KVFREPLFLD (96 aa)) constitute a propeptide, activation peptide. 2 cysteine pairs are disulfide-bonded: Cys-135–Cys-178 and Cys-169–Cys-211. Cys-138 is an active-site residue. Asn-221 is a glycosylation site (N-linked (GlcNAc...) asparagine). Cysteines 270 and 323 form a disulfide. His-277 is a catalytic residue. Asn-292 carries N-linked (GlcNAc...) asparagine glycosylation. Asn-301 is an active-site residue.

Belongs to the peptidase C1 family. As to expression, predominantly expressed in the thymus and testis. Also expressed in corneal epithelium, and to a lesser extent in conjunctival epithelium and skin.

The protein localises to the lysosome. It catalyses the reaction The recombinant enzyme hydrolyzes proteins (serum albumin, collagen) and synthetic substrates (Z-Phe-Arg-NHMec &gt; Z-Leu-Arg-NHMec &gt; Z-Val-Arg-NHMec).. Its activity is regulated as follows. Inhibited by CST6. Its function is as follows. Cysteine protease. May have an important role in corneal physiology. The polypeptide is Cathepsin L2 (CTSV) (Homo sapiens (Human)).